Consider the following 400-residue polypeptide: Golgin-45 (400 aa).

Residues 1–16 are compositionally biased toward polar residues; that stretch reads MTTKNLETKVTVTSSP. The tract at residues 1–58 is disordered; sequence MTTKNLETKVTVTSSPIRGAGDGMETEEPPKSVEVTSGVQSRKHHSLQSPWKKAVPSE. Position 15 is a phosphoserine (S15). The Tankyrase-binding motif signature appears at 18 to 22; sequence RGAGD. Residue S49 is modified to Phosphoserine. Residues 120–213 are a coiled coil; sequence NKELSEVKNV…QLERMSIQCD (94 aa). T348 bears the Phosphothreonine mark. Phosphoserine is present on S353. The interval 394–400 is essential for interaction with GORASP2; sequence RGELIAL.

Interacts with GORASP2. Interacts with the GTP-bound form of RAB2, but not with other Golgi Rab proteins. Identified in a complex with RAB2 and GORASP2. ADP-ribosylated by tankyrase TNKS and TNKS2. Poly-ADP-ribosylated protein is recognized by RNF146, followed by ubiquitination. Post-translationally, ubiquitinated by RNF146 when poly-ADP-ribosylated, leading to its degradation. As to expression, detected in adrenal gland.

The protein resides in the golgi apparatus membrane. It is found in the nucleus. Its subcellular location is the cytoplasm. Required for normal Golgi structure and for protein transport from the endoplasmic reticulum (ER) through the Golgi apparatus to the cell surface. This is Golgin-45 (BLZF1) from Homo sapiens (Human).